The chain runs to 308 residues: MNPPSKIKHYLQFKDFSLEEYAYLLDRSRILKAKFKNYETWHPLHDRTLAMIFEKNSTRTRLSFEAGIHQLGGHAVFLNTRDSQLGRGEPIEDAAQVISRMTDIIMIRTFGQEIIERFATHSRVPVINGLTNEYHPCQVLADIFTFIEHRGPIQGKTVTWVGDANNMAYTWIQAAEILGFRFHFSAPKGYQLDPVMVADSSRPFVHVFENPLEACEGAHLVTTDVWTSMGYEAENEARKKAFGDWMVTEAMMQRAQPDALFMHCLPAHRGEEVEAAVIDGKQSVVWDEAENRLHVQKALMEYLLCGRY.

Carbamoyl phosphate contacts are provided by residues 57 to 60 (STRT), Gln-84, Arg-108, and 135 to 138 (HPCQ). Residues Asn-166, Asp-224, and 228–229 (SM) each bind L-ornithine. Residues 264–265 (CL) and Arg-292 each bind carbamoyl phosphate.

It belongs to the aspartate/ornithine carbamoyltransferase superfamily. OTCase family.

The protein resides in the cytoplasm. The enzyme catalyses carbamoyl phosphate + L-ornithine = L-citrulline + phosphate + H(+). It functions in the pathway amino-acid biosynthesis; L-arginine biosynthesis; L-arginine from L-ornithine and carbamoyl phosphate: step 1/3. In terms of biological role, reversibly catalyzes the transfer of the carbamoyl group from carbamoyl phosphate (CP) to the N(epsilon) atom of ornithine (ORN) to produce L-citrulline. This Ralstonia nicotianae (strain ATCC BAA-1114 / GMI1000) (Ralstonia solanacearum) protein is Ornithine carbamoyltransferase.